We begin with the raw amino-acid sequence, 582 residues long: Threonine--tRNA ligase (582 aa).

A catalytic region spans residues 185-478 (DHRKLGKELE…LTEQYGGAFP (294 aa)). Positions 278, 329, and 455 each coordinate Zn(2+).

The protein belongs to the class-II aminoacyl-tRNA synthetase family. As to quaternary structure, homodimer. The cofactor is Zn(2+).

The protein resides in the cytoplasm. It carries out the reaction tRNA(Thr) + L-threonine + ATP = L-threonyl-tRNA(Thr) + AMP + diphosphate + H(+). Catalyzes the attachment of threonine to tRNA(Thr) in a two-step reaction: L-threonine is first activated by ATP to form Thr-AMP and then transferred to the acceptor end of tRNA(Thr). Also edits incorrectly charged L-seryl-tRNA(Thr). In Dehalococcoides mccartyi (strain CBDB1), this protein is Threonine--tRNA ligase.